The sequence spans 98 residues: Plastocyanin (98 aa).

Residues 1 to 98 (AAIVKLGGDD…AGMKMTITVQ (98 aa)) form the Plastocyanin-like domain. The Cu cation site is built by His-38, Cys-83, His-86, and Met-91.

Belongs to the plastocyanin family. It depends on Cu(2+) as a cofactor.

It localises to the plastid. The protein resides in the chloroplast thylakoid membrane. In terms of biological role, participates in electron transfer between P700 and the cytochrome b6-f complex in photosystem I. This Ulva prolifera (Green seaweed) protein is Plastocyanin (PETE).